The chain runs to 814 residues: Pre-rRNA-processing protein TSR1 homolog (814 aa).

The segment at 1–67 is disordered; it reads MADHAFHRPG…NQMNQLRKNK (67 aa). A compositionally biased stretch (basic residues) spans 16 to 27; sequence NKAHKTGRHRSK. Residues 84–249 enclose the Bms1-type G domain; it reads APFLVCLLPM…MRRIGGQKKR (166 aa). Disordered regions lie at residues 316-357 and 392-448; these read PYKL…DAEQ and WIPD…EEFQ. The span at 317–340 shows a compositional bias: basic and acidic residues; that stretch reads YKLDKSRDGENSEVRLLDRSDPSK. A compositionally biased stretch (acidic residues) spans 395 to 426; it reads DVEEVEDPDGKDDDDMSEDDDDDKEDDNEDFM. Over residues 431-442 the composition is skewed to basic and acidic residues; the sequence is KSFEDEYEKRDS. Phosphothreonine is present on T444.

Belongs to the TRAFAC class translation factor GTPase superfamily. Bms1-like GTPase family. TSR1 subfamily.

It is found in the nucleus. Its subcellular location is the nucleolus. In terms of biological role, required during maturation of the 40S ribosomal subunit in the nucleolus. The protein is Pre-rRNA-processing protein TSR1 homolog of Drosophila melanogaster (Fruit fly).